The sequence spans 250 residues: MTSQERGTRRGDTRGNVRDFPDSPADASGLTQRQKKVLEVIRSAVERRGYPPSVREIGEAVGLTSTSSVAHQLKVLQEKGFLRRDPNRPRAMEVLPIGGAKTGGRSRAGAAAAAGAPAETTALEAGTPTYVPLVGRIAAGGPILAEQAIEDVYPLPKEIVGEGTLFLLKVVGQSMINAAICDGDFVVVRQQPVADNGEIVAAMIDGEATVKRFRQRDGRVWLAPENPAFSDIPAEDATILGRIVAVMRRV.

Basic and acidic residues predominate over residues 1-21; it reads MTSQERGTRRGDTRGNVRDFP. Residues 1–33 form a disordered region; sequence MTSQERGTRRGDTRGNVRDFPDSPADASGLTQR. The segment at residues 54 to 74 is a DNA-binding region (H-T-H motif); the sequence is VREIGEAVGLTSTSSVAHQLK. Residues Ser174 and Lys211 each act as for autocatalytic cleavage activity in the active site.

The protein belongs to the peptidase S24 family. Homodimer.

It carries out the reaction Hydrolysis of Ala-|-Gly bond in repressor LexA.. Represses a number of genes involved in the response to DNA damage (SOS response), including recA and lexA. In the presence of single-stranded DNA, RecA interacts with LexA causing an autocatalytic cleavage which disrupts the DNA-binding part of LexA, leading to derepression of the SOS regulon and eventually DNA repair. The sequence is that of LexA repressor from Parafrankia sp. (strain EAN1pec).